A 241-amino-acid chain; its full sequence is F-box protein At3g22350 (241 aa).

An F-box domain is found at 1–44; it reads MSDLPLDLVEEILSRVSATSLKRLRSTCKQWNTLFKKRSFSQKH.

This is F-box protein At3g22350 from Arabidopsis thaliana (Mouse-ear cress).